A 271-amino-acid polypeptide reads, in one-letter code: p-hydroxybenzoate hydroxylase transcriptional activator (271 aa).

In terms of domain architecture, HTH iclR-type spans 23-83 (IAGLAKGLAL…TDEHYFWLTH (61 aa)). Positions 45 to 64 (VTQVAERTGISRTAARRYLK) form a DNA-binding region, H-T-H motif. In terms of domain architecture, IclR-ED spans 98–271 (LPKVAQSFLN…NTANELRNLV (174 aa)).

Positive regulator of the pobA gene for p-hydroxybenzoate hydroxylase. This is p-hydroxybenzoate hydroxylase transcriptional activator (pobR) from Acinetobacter baylyi (strain ATCC 33305 / BD413 / ADP1).